The sequence spans 749 residues: Myosin-binding protein 2 (749 aa).

A helical membrane pass occupies residues 17–37 (ITLILVYAFLEWSLIFFILLN). The interval 164 to 184 (NLNDSQEETEEKKVPQSHEKL) is disordered. A compositionally biased stretch (basic and acidic residues) spans 173–184 (EEKKVPQSHEKL). Positions 411–509 (LTVDKLKFEL…ELEKELEVYR (99 aa)) constitute a GTD-binding domain. Residues 589 to 621 (ERLSILGRLKFLEEKLTDLNNEEDDEEEAKTFE) are a coiled coil. Residues 608 to 640 (NNEEDDEEEAKTFESNGSINGNEHIHGKETNGK) form a disordered region. The span at 630–639 (EHIHGKETNG) shows a compositional bias: basic and acidic residues. Residues 676–710 (DSEKGENVTIEEEVDELYERLEALEADREFLRHCV) are a coiled coil.

Interacts with myosin XI-K and XI-1. Expressed in leaf epidermal cells, roots and root hairs.

It localises to the endomembrane system. Functionally, membrane-anchored myosin receptors that define a distinct, plant-specific transport vesicle compartment. This Arabidopsis thaliana (Mouse-ear cress) protein is Myosin-binding protein 2.